Consider the following 87-residue polypeptide: Putative defensin-like protein 84 (87 aa).

The first 27 residues, M1–G27, serve as a signal peptide directing secretion. 4 disulfide bridges follow: C32–C73, C36–C54, C42–C71, and C46–C72.

The protein belongs to the DEFL family.

The protein localises to the secreted. This is Putative defensin-like protein 84 from Arabidopsis thaliana (Mouse-ear cress).